Reading from the N-terminus, the 375-residue chain is Chanoclavine-I aldehyde reductase ifgG (375 aa).

FMN-binding positions include 31 to 33 (PTT), alanine 66, glutamine 108, and histidine 176. Substrate contacts are provided by histidine 176 and asparagine 179. Tyrosine 181 functions as the Proton donor in the catalytic mechanism. FMN is bound by residues lysine 228, glycine 300, 325 to 326 (GR), and arginine 326. Residue tyrosine 353 participates in substrate binding.

The protein belongs to the NADH:flavin oxidoreductase/NADH oxidase family. The cofactor is FMN.

The enzyme catalyses dihydrochanoclavine-I aldehyde + NADP(+) = chanoclavine-I aldehyde + NADPH + H(+). It functions in the pathway alkaloid biosynthesis; ergot alkaloid biosynthesis. In terms of biological role, chanoclavine-I aldehyde reductase; part of the gene cluster that mediates the biosynthesis of isofumigaclavines, fungal ergot alkaloids. The tryptophan dimethylallyltransferase ifgA catalyzes the first step of ergot alkaloid biosynthesis by condensing dimethylallyl diphosphate (DMAP) and tryptophan to form 4-dimethylallyl-L-tryptophan. The second step is catalyzed by the methyltransferase ifgB that methylates 4-dimethylallyl-L-tryptophan in the presence of S-adenosyl-L-methionine, resulting in the formation of N-methyl-dimethylallyl-L-tryptophan. The catalase ifgD and the FAD-dependent oxidoreductase ifgC then transform N-methyl-dimethylallyl-L-tryptophan to chanoclavine-I which is further oxidized by ifgE in the presence of NAD(+), resulting in the formation of chanoclavine-I aldehyde. The chanoclavine-I aldehyde reductases ifgG and/or fgaOx3 reduce chanoclavine-I aldehyde to dihydrochanoclavine-I aldehyde that spontaneously dehydrates to form 6,8-dimethyl-6,7-didehydroergoline. The festuclavine dehydrogenases ifgF1 and/or ifgF2 then catalyze the reduction of 6,8-dimethyl-6,7-didehydroergoline to form festuclavine. Hydrolysis of festuclavine by a yet undetermined cytochrome P450 monooxygenase (called ifgH) then leads to the formation of isofumigaclavine B which is in turn acetylated by ifgI to isofumigaclavine A. Penicillium roqueforti has interestingly at least two sets of genes for the consumption of chanoclavine-I aldehyde on three different loci, the OYEs ifgG/fgaOx3 and the festuclavine synthase homologs ifgF1/ifgF2. The reason for the duplication of these genes is unclear, probably to ensure the conversion of chanoclavine-I aldehyde by differential gene expression under various environmental conditions. The sequence is that of Chanoclavine-I aldehyde reductase ifgG from Penicillium roqueforti (strain FM164).